The following is a 508-amino-acid chain: Maturase K (508 aa).

Belongs to the intron maturase 2 family. MatK subfamily.

The protein resides in the plastid. It is found in the chloroplast. In terms of biological role, usually encoded in the trnK tRNA gene intron. Probably assists in splicing its own and other chloroplast group II introns. The chain is Maturase K from Manilkara zapota (Sapodilla plum).